A 213-amino-acid polypeptide reads, in one-letter code: MAQLSLLVLSLFLTLISLPPPGASISSCNGPCRDLNDCDGQLICIEGKCNDDPEVGTHICRGTTPSPQPGGCKPSGTLTCRGKSHPTYDCSPPVTSSTPAKLTNNDFSEGGDGGGPSECDESYHSNNERIVALSTGWYNGGSRCGKMIRITASNGKSVSAKVVDKCDSRHGCDKEHAGQPPCRNNIVDGSNAVWSALGLDKNVGVVDITWSMA.

The first 24 residues, Met1–Ser24, serve as a signal peptide directing secretion. Cystine bridges form between Cys28–Cys60, Cys32–Cys44, and Cys38–Cys49. 4-hydroxyproline occurs at positions 65 and 67. Disulfide bonds link Cys72/Cys90, Cys80/Cys172, Cys119/Cys144, and Cys166/Cys182. Residues Ser91–Glu121 are disordered. Positions Pro93 to Phe107 are enriched in polar residues.

Belongs to the kiwellin family. Undergoes proteolytic cleavage by actinidin to produce kissper and KiTH. Three forms of KiTH are produced by cleavage at different sites.

Its subcellular location is the secreted. In terms of biological role, kissper is an anion-selective pore-forming peptide. The sequence is that of Kiwellin from Actinidia chinensis var. chinensis (Chinese soft-hair kiwi).